A 431-amino-acid chain; its full sequence is Histidinol dehydrogenase (431 aa).

NAD(+)-binding residues include Tyr-127, Gln-189, and Asn-212. Positions 237, 259, and 262 each coordinate substrate. Gln-259 and His-262 together coordinate Zn(2+). Catalysis depends on proton acceptor residues Glu-326 and His-327. Substrate-binding residues include His-327, Asp-360, Glu-414, and His-419. Residue Asp-360 participates in Zn(2+) binding. His-419 lines the Zn(2+) pocket.

The protein belongs to the histidinol dehydrogenase family. The cofactor is Zn(2+).

The enzyme catalyses L-histidinol + 2 NAD(+) + H2O = L-histidine + 2 NADH + 3 H(+). Its pathway is amino-acid biosynthesis; L-histidine biosynthesis; L-histidine from 5-phospho-alpha-D-ribose 1-diphosphate: step 9/9. Catalyzes the sequential NAD-dependent oxidations of L-histidinol to L-histidinaldehyde and then to L-histidine. The chain is Histidinol dehydrogenase from Xylella fastidiosa (strain 9a5c).